Reading from the N-terminus, the 367-residue chain is Voltage-gated potassium channel subunit beta-2 (367 aa).

Phosphoserine occurs at positions 9, 14, and 20. Residue R28 is modified to Asymmetric dimethylarginine; alternate. R28 bears the Omega-N-methylarginine; alternate mark. Position 31 is a phosphoserine (S31). NADP(+)-binding residues include T56, W57, Q63, and D85. The Proton donor/acceptor role is filled by Y90. Residue S112 is modified to Phosphoserine. N6-acetyllysine is present on K124. 18 residues coordinate NADP(+): N158, S188, R189, Q214, W243, S244, P245, L246, A247, C248, K254, Y262, R264, G323, S325, Q329, E332, and N333.

It belongs to the shaker potassium channel beta subunit family. Homotetramer. Interaction with tetrameric potassium channel alpha subunits gives rise to a heterooctamer. Identified in potassium channel complexes containing KCNA1, KCNA2, KCNA4, KCNA5, KCNA6, KCNAB1, KCNAB2 and KCND3. Interacts (in unphosphorylated form) with MAPRE1. Forms a ternary complex with SQSTM1 and PRKCZ. Post-translationally, phosphorylated by PRKCZ; may be regulated by incorporation in a complex composed of PRKCZ and SQSTM1. Detected in brain. Detected at basket cell terminals in cerebellum and in the juxtaparanodal region of nodes of Ranvier (at protein level). Strongest expression in brain and eye. Highest levels in brain detected in brainstem and diencephalon. Strong expression also detected in lung and heart. Moderate expression in kidney, T-lymphocytes and skeletal muscle.

Its subcellular location is the cytoplasm. It is found in the membrane. The protein localises to the cell membrane. It localises to the cell projection. The protein resides in the axon. Its subcellular location is the synapse. It is found in the synaptosome. The protein localises to the cytoskeleton. The catalysed reaction is hydroxyacetone + NADP(+) = methylglyoxal + NADPH + H(+). The enzyme catalyses (E)-4-oxonon-2-en-1-ol + NADP(+) = (E)-4-oxonon-2-enal + NADPH + H(+). In terms of biological role, regulatory subunit of the voltage-gated potassium (Kv) Shaker channel family. Shaker channels are composed of pore-forming and potassium-conducting alpha subunits and of regulatory beta subunits. The beta-2/KCNAB2 subunit promotes potassium channel closure via a mechanism that does not involve physical obstruction of the channel pore. Promotes the inactivation of Kv1.4/KCNA4 and Kv1.5/KCNA5 alpha subunit-containing channels. Displays nicotinamide adenine dinucleotide phosphate (NADPH)-dependent aldoketoreductase activity by catalyzing the NADPH-dependent reduction of a wide range of aldehyde and ketone substrates. Substrate specificity includes methylglyoxal, 9,10-phenanthrenequinone, prostaglandin J2, 4-nitrobenzaldehyde, 4-nitroacetophenone and 4-oxo-trans-2-nonenal (in vitro, no physiological substrate identified yet). The binding of oxidized and reduced nucleotide cofactors alters Kv channel gating and may contribute to dynamic fine tuning of cell excitability. Contributes to the regulation of nerve signaling, and prevents neuronal hyperexcitability. This Mus musculus (Mouse) protein is Voltage-gated potassium channel subunit beta-2.